We begin with the raw amino-acid sequence, 127 residues long: Basic leucine zipper transcriptional factor ATF-like 3 (127 aa).

Residues 1 to 72 (MSQGLPAAGS…LHEEYESLEQ (72 aa)) are disordered. 2 positions are modified to phosphoserine: Ser-2 and Ser-31. In terms of domain architecture, bZIP spans 35–98 (DDRKVRRREK…KHLTEALKEH (64 aa)). Residues 37 to 62 (RKVRRREKNRVAAQRSRKKQTQKADK) form a basic motif region. A compositionally biased stretch (basic and acidic residues) spans 58–67 (QKADKLHEEY). The tract at residues 63–91 (LHEEYESLEQENTMLRREIGKLTEELKHL) is leucine-zipper.

It belongs to the bZIP family. Heterodimer; heterodimerizes with JUN family proteins. Interacts with JUN.

The protein resides in the nucleus. Its function is as follows. AP-1 family transcription factor that controls the differentiation of CD8(+) thymic conventional dendritic cells in the immune system. Required for development of CD8-alpha(+) classical dendritic cells (cDCs) and related CD103(+) dendritic cells that cross-present antigens to CD8 T-cells and produce interleukin-12 (IL12) in response to pathogens. Acts via the formation of a heterodimer with JUN family proteins that recognizes and binds DNA sequence 5'-TGA[CG]TCA-3' and regulates expression of target genes. The polypeptide is Basic leucine zipper transcriptional factor ATF-like 3 (BATF3) (Homo sapiens (Human)).